Reading from the N-terminus, the 139-residue chain is Large ribosomal subunit protein bL9m (139 aa).

The segment at 83 to 121 is disordered; that stretch reads DHQQLSKRHETEVQKNMELRKESVFGHKKEEKPKEEKKG.

This sequence belongs to the bacterial ribosomal protein bL9 family. Component of the mitochondrial large ribosomal subunit (mt-LSU). Mature yeast 74S mitochondrial ribosomes consist of a small (37S) and a large (54S) subunit. The 37S small subunit contains a 15S ribosomal RNA (15S mt-rRNA) and 34 different proteins. The 54S large subunit contains a 21S rRNA (21S mt-rRNA) and 46 different proteins.

The protein resides in the mitochondrion. Functionally, component of the mitochondrial ribosome (mitoribosome), a dedicated translation machinery responsible for the synthesis of mitochondrial genome-encoded proteins, including at least some of the essential transmembrane subunits of the mitochondrial respiratory chain. The mitoribosomes are attached to the mitochondrial inner membrane and translation products are cotranslationally integrated into the membrane. The protein is Large ribosomal subunit protein bL9m (MRPL50) of Saccharomyces cerevisiae (strain ATCC 204508 / S288c) (Baker's yeast).